We begin with the raw amino-acid sequence, 308 residues long: Reaction center protein M chain (308 aa).

3 helical membrane-spanning segments follow: residues 54-80 (GSLG…YQAG), 111-140 (KEGG…RAQA), and 143-168 (MGKH…RPIL). Positions 183 and 203 each coordinate (7R,8Z)-bacteriochlorophyll b. The chain crosses the membrane as a helical span at residues 198-226 (FYNPFHGLSIAFLYGSALLFAMHGATILA). The Fe cation site is built by His-220 and Glu-235. Trp-253 lines the a ubiquinone pocket. Residues 260–286 (NATMEGIHRWAIWMAVLVTLTGGIGIL) form a helical membrane-spanning segment. His-267 is a Fe cation binding site.

The protein belongs to the reaction center PufL/M/PsbA/D family. As to quaternary structure, reaction center is composed of four bacteriochlorophylls, two bacteriopheophytins, two ubiquinones, one iron, and three highly hydrophobic polypeptide chains (designated L, M, and H).

It localises to the cellular chromatophore membrane. Functionally, the reaction center is a membrane-bound complex that mediates the initial photochemical event in the electron transfer process of photosynthesis. In Cereibacter sphaeroides (strain ATCC 17023 / DSM 158 / JCM 6121 / CCUG 31486 / LMG 2827 / NBRC 12203 / NCIMB 8253 / ATH 2.4.1.) (Rhodobacter sphaeroides), this protein is Reaction center protein M chain (pufM).